Here is a 214-residue protein sequence, read N- to C-terminus: Acyl-homoserine-lactone synthase (214 aa).

The protein belongs to the autoinducer synthase family.

It carries out the reaction a fatty acyl-[ACP] + S-adenosyl-L-methionine = an N-acyl-L-homoserine lactone + S-methyl-5'-thioadenosine + holo-[ACP] + H(+). Its function is as follows. Required for the synthesis of autoinducer molecules such as OHHL (N-(3-oxohexanoyl)-L-homoserine lactone), and HHL (N-hexanoyl-L-homoserine lactone). The chain is Acyl-homoserine-lactone synthase (yenI) from Yersinia enterocolitica.